Reading from the N-terminus, the 198-residue chain is Autophagy-related protein 33 (198 aa).

3 consecutive transmembrane segments (helical) span residues 17–37, 60–80, and 86–106; these read VSLGLLTGVSYSISSLALPAL, PVLALTSLASAPFLISFFLAP, and PYLLYTAILATLSSVAPILIP. The tract at residues 111–147 is disordered; the sequence is APRRTASSAPRKSSRAKMEASYEVLGDAHSEPASDED. Low complexity predominate over residues 112-121; sequence PRRTASSAPR. Residues 126 to 142 are compositionally biased toward basic and acidic residues; that stretch reads AKMEASYEVLGDAHSEP. Residues 171–191 form a helical membrane-spanning segment; it reads TAISALGFAMAVVGIWGDGAP.

This sequence belongs to the ATG33 family.

Its subcellular location is the mitochondrion membrane. Involved in the selective degradation of mitochondria via autophagy during starvation and at post-log phase. Autophagy is required for proper vegetative growth, asexual/sexual reproduction, and full virulence. Autophagy is particularly involved in the biosynthesis of deoxynivalenol (DON), an important virulence determinant. The sequence is that of Autophagy-related protein 33 from Gibberella zeae (strain ATCC MYA-4620 / CBS 123657 / FGSC 9075 / NRRL 31084 / PH-1) (Wheat head blight fungus).